Here is a 439-residue protein sequence, read N- to C-terminus: Probable cinnamyl alcohol dehydrogenase 8C (439 aa).

Residue C120 participates in Zn(2+) binding. Residue T122 participates in NADP(+) binding. The Zn(2+) site is built by H142, E143, C173, C176, C179, C187, and C239. Residues T243, 264–269 (GLGGLG), 287–292 (STSPGK), T327, G351, and 374–376 (NCV) contribute to the NADP(+) site.

It belongs to the zinc-containing alcohol dehydrogenase family. As to quaternary structure, homodimer. It depends on Zn(2+) as a cofactor.

It carries out the reaction (E)-cinnamyl alcohol + NADP(+) = (E)-cinnamaldehyde + NADPH + H(+). The catalysed reaction is (E)-coniferol + NADP(+) = (E)-coniferaldehyde + NADPH + H(+). It catalyses the reaction (E)-sinapyl alcohol + NADP(+) = (E)-sinapaldehyde + NADPH + H(+). The enzyme catalyses (E)-4-coumaroyl alcohol + NADP(+) = (E)-4-coumaraldehyde + NADPH + H(+). It carries out the reaction (E)-caffeyl alcohol + NADP(+) = (E)-caffeyl aldehyde + NADPH + H(+). It functions in the pathway aromatic compound metabolism; phenylpropanoid biosynthesis. Its function is as follows. Involved in lignin biosynthesis. Catalyzes the final step specific for the production of lignin monomers. Catalyzes the NADPH-dependent reduction of coniferaldehyde, 5-hydroxyconiferaldehyde, sinapaldehyde, 4-coumaraldehyde and caffeyl aldehyde to their respective alcohols. This chain is Probable cinnamyl alcohol dehydrogenase 8C, found in Oryza sativa subsp. japonica (Rice).